A 197-amino-acid polypeptide reads, in one-letter code: Holliday junction branch migration complex subunit RuvA (197 aa).

Positions 1–64 are domain I; the sequence is MIGHLEGRLR…EDAIQLYGFR (64 aa). Positions 65 to 143 are domain II; that stretch reads TVAEKDMFLR…VKKGREAEQP (79 aa). Positions 144–145 are flexible linker; it reads AP. Positions 146-197 are domain III; that stretch reads AAESSYGDAYSALVNLGYRPAEAEKALGKAIKSLGADPPVEKLLKETLRLLA.

The protein belongs to the RuvA family. As to quaternary structure, homotetramer. Forms an RuvA(8)-RuvB(12)-Holliday junction (HJ) complex. HJ DNA is sandwiched between 2 RuvA tetramers; dsDNA enters through RuvA and exits via RuvB. An RuvB hexamer assembles on each DNA strand where it exits the tetramer. Each RuvB hexamer is contacted by two RuvA subunits (via domain III) on 2 adjacent RuvB subunits; this complex drives branch migration. In the full resolvosome a probable DNA-RuvA(4)-RuvB(12)-RuvC(2) complex forms which resolves the HJ.

It is found in the cytoplasm. Functionally, the RuvA-RuvB-RuvC complex processes Holliday junction (HJ) DNA during genetic recombination and DNA repair, while the RuvA-RuvB complex plays an important role in the rescue of blocked DNA replication forks via replication fork reversal (RFR). RuvA specifically binds to HJ cruciform DNA, conferring on it an open structure. The RuvB hexamer acts as an ATP-dependent pump, pulling dsDNA into and through the RuvAB complex. HJ branch migration allows RuvC to scan DNA until it finds its consensus sequence, where it cleaves and resolves the cruciform DNA. The chain is Holliday junction branch migration complex subunit RuvA from Syntrophobacter fumaroxidans (strain DSM 10017 / MPOB).